The chain runs to 507 residues: ATP synthase subunit beta (507 aa).

A disordered region spans residues 1-22; sequence MSGLASKAKSRVKSSKGKNSTN. Position 183–190 (183–190) interacts with ATP; that stretch reads GGAGVGKT.

It belongs to the ATPase alpha/beta chains family. F-type ATPases have 2 components, CF(1) - the catalytic core - and CF(0) - the membrane proton channel. CF(1) has five subunits: alpha(3), beta(3), gamma(1), delta(1), epsilon(1). CF(0) has three main subunits: a(1), b(2) and c(9-12). The alpha and beta chains form an alternating ring which encloses part of the gamma chain. CF(1) is attached to CF(0) by a central stalk formed by the gamma and epsilon chains, while a peripheral stalk is formed by the delta and b chains.

The protein resides in the cell inner membrane. It catalyses the reaction ATP + H2O + 4 H(+)(in) = ADP + phosphate + 5 H(+)(out). Its function is as follows. Produces ATP from ADP in the presence of a proton gradient across the membrane. The catalytic sites are hosted primarily by the beta subunits. This is ATP synthase subunit beta from Ehrlichia chaffeensis (strain ATCC CRL-10679 / Arkansas).